Here is a 789-residue protein sequence, read N- to C-terminus: Glycerol-3-phosphate acyltransferase (789 aa).

The HXXXXD motif signature appears at 275–280 (SHRSYI).

This sequence belongs to the GPAT/DAPAT family.

Its subcellular location is the cell membrane. It carries out the reaction sn-glycerol 3-phosphate + an acyl-CoA = a 1-acyl-sn-glycero-3-phosphate + CoA. The protein operates within phospholipid metabolism; CDP-diacylglycerol biosynthesis; CDP-diacylglycerol from sn-glycerol 3-phosphate: step 1/3. This Mycobacterium tuberculosis (strain ATCC 25177 / H37Ra) protein is Glycerol-3-phosphate acyltransferase.